The primary structure comprises 4662 residues: Protein PF3D7_1417600 (4662 aa).

The next 2 helical transmembrane spans lie at 136-156 (INYV…YLYI) and 161-181 (YIYY…FHII). One copy of the LRR 1 repeat lies at 466-489 (IKNIDSINKNHKRLIKISNYNITN). The segment at 583–710 (YRNDGDVNNK…KMKPDNTLNE (128 aa)) is disordered. Over residues 590 to 644 (NNKNGYNNNEHSNSSNERSNNNGDNNNNNHNNNNHNNNHHNNGSNNHNGNNNSNN) the composition is skewed to low complexity. Residues 650–666 (DDDKKGNDKKNEDKDDE) show a composition bias toward basic and acidic residues. The span at 690 to 701 (KKRKEKSKNKNK) shows a compositional bias: basic residues. Positions 783–856 (YKPTEPVNIF…ISNDIKMFWF (74 aa)) constitute an HSA domain. A disordered region spans residues 942-967 (GLMNKMSHQNGKNNNHNDYNNKCEDN). The LRR 2 repeat unit spans residues 1150–1172 (NVHINHIQYDDNNLYYNDDLYNY). Residues 1505-1524 (NNNNNSNNNNSNSNNNSNSN) show a composition bias toward low complexity. Disordered regions lie at residues 1505 to 1540 (NNNN…NNSS) and 1705 to 1761 (KINS…NEKD). Positions 1710-1761 (NNDKSDDKNDDKNDKKNDGKNDKNDEKDDNKTGEKGDNKIGEKDDNKINEKD) are enriched in basic and acidic residues. LRR repeat units follow at residues 2063-2086 (ITKV…MFNK) and 2129-2153 (DEEI…NVKD). Residues 2228-2261 (KNKSNKKKRAKKNIKLGEEENESECNNEGECNNE) form a disordered region. The span at 2230 to 2241 (KSNKKKRAKKNI) shows a compositional bias: basic residues. Over residues 2246-2261 (EENESECNNEGECNNE) the composition is skewed to acidic residues. LRR repeat units follow at residues 2672-2695 (LDKL…KTID), 2773-2796 (NTVL…TVDI), 2864-2888 (INDD…VNNN), and 2904-2929 (ANNI…YNNS). Positions 2956–2975 (MNNTKQRSHSSYHTSFPMQN) are disordered. 6 LRR repeats span residues 3377–3400 (QNNM…NITM), 3438–3461 (NNSM…YNNS), 3756–3781 (SQRL…NINN), 3935–3960 (QPNI…NINN), 3965–3985 (QPNI…SMNQ), and 3986–4010 (PNIN…NINN). A coiled-coil region spans residues 4203–4272 (DMNQQERLQQ…ERLQQKWEQQ (70 aa)). LRR repeat units lie at residues 4296–4321 (YQEL…IFLK) and 4333–4357 (QKMH…SLQQ). The segment at 4384–4412 (QMNHQQINKHQMNQQQMNKQQMNQQQINQ) is disordered.

The protein localises to the membrane. This Plasmodium falciparum (isolate 3D7) protein is Protein PF3D7_1417600.